The primary structure comprises 516 residues: RxLR effector protein PITG_15127 (516 aa).

An N-terminal signal peptide occupies residues 1–22 (MRLYSGAILCTIATLLISVSTA). Positions 48-63 (RFLRVSTQNTENGENR) match the RxLR-dEER motif.

This sequence belongs to the RxLR effector family.

The protein resides in the secreted. It localises to the host cell membrane. It is found in the host nucleus. The protein localises to the host cytoplasm. Effector that enhances P.infestans colonization of Nicotiana benthamiana leaves. The chain is RxLR effector protein PITG_15127 from Phytophthora infestans (strain T30-4) (Potato late blight agent).